The primary structure comprises 1437 residues: MAISTSLLIVALLIKLCLVNTAPPISKCFQDGILIAELKSSSGISEFCIKDDISILKSEITYSKNDTGIFMHSKVFRHWTVADWKQCNHTSAGGSTNVLEVDKNLNLVAKNYMCTRPCVITIDKENAQLLFQTEQLNQFEVTGTTISTGWFKSKTSVSLDNTCEHIKVTCGKKSLQFHACFKQHMSCVRFLHRSVLPGYMASSICQNIELIIIIILTLAIFIFMCIITRTYICYLMLPLFAPIAYLYGWLYNRSCKKCICCGLAYHPFTNCGSYCVCGSRFETSDRMRLHRESGLCQGFKSLRVARSLCKSKGSSLVISILTAMLILSFITPLEAMTTNYPDDKKFTLKEVNDIVLGRDMEQELKSSILILMSICGIGIILIFFGLTVLLEIVLELIAKRSTIFCKECNLIHDKKSMTYRGDFTNKCGFCPCGELEDPEGLVIHTTRKSCTYYIKIRNLKLIMLIFSIVILMQNATMLVVAGENCWTNTEIKADCVGPLIGPSACTNKGSKTYKTVAQELVTASKITQLDADKYVLLGDTIESALDAITSQKHYSAMHLLETMFLMKHCDYYKVYEHNSGYSQTKWRLIAIANSFDICTNTPTPNFCKCLSDSSCSTTTLNFATSMNATYTSKVEFFNHDFTLFLDIFEAAFPGSATAFLFKKIKEKNPYQAFEMMGKIANKYPNNKLLVVILKYGQYMVGLSHASTYQLKQEWVAKSLSLTRAQRTGLKMSMANAEPGPATKECSDAKTIACLTPKFQVEVNNLMSCGASPNFKIYVKTGELYKAHDRNSVWCLNDMHCLTPYTPANAEIITTMKKMDCWQDNPKQPTDEYAIPKRSCQMKDRGLCNSGADKWKIIKCDNHKLFYTDALERRDPASIVGSNHCFSEKCQIERYPINPTSLTNCEWLYRAVRPEYIKKLSLQTIEEYKKAIADKLTHTLQLYHFAPLLENLPHIKPTYKYITAQGTYTADGIEGASITTSIPALSGTSVGFKINAKDGTDLLDIVVYIKASVVKSIYNHIYDTGPTININSKHDELCTGQCPKKIPADPNWLTFSQERTSRWGCEEFGCLAINTGCVYGSCQDVIRTETKVYRKANEETVMLTVCITYPGHTFCTDVNAHEPKITDELELQFKTIDIKSLPNLVAVTNHKLYTGQINDLGTFGQMCGNVQKTNTSHTGAGTPKFDYTCYSASRKDIIIRRCYNNNYDSCRLLNQESDLLFDDNHETLVVYNNKRLNGELALKLLLGDIQYKLYTENMELELEAKCVGCVGCFESYQCNLQITSSLDETALYLVPVSHFHDRIQIKTTKKDYAMKISCTRDPGDKASFRVCGKSYDFNFHTVPKNDKIEVNVGDETSYIKEKDNRCGRWLCRVRDEGLSVIFEPLNNFFGNYLNMFLYILGGIILLFLALYILMPMCARLRDELKRNERLHQMEMKKR.

The first 21 residues, 1–21 (MAISTSLLIVALLIKLCLVNT), serve as a signal peptide directing secretion. The Lumenal portion of the chain corresponds to 22–207 (APPISKCFQD…GYMASSICQN (186 aa)). N-linked (GlcNAc...) asparagine; by host glycans are attached at residues asparagine 65 and asparagine 88. Residues 208–228 (IELIIIIILTLAIFIFMCIIT) form a helical membrane-spanning segment. Over 229–312 (RTYICYLMLP…RVARSLCKSK (84 aa)) the chain is Cytoplasmic. A helical membrane pass occupies residues 313-333 (GSSLVISILTAMLILSFITPL). Over 334–373 (EAMTTNYPDDKKFTLKEVNDIVLGRDMEQELKSSILILMS) the chain is Lumenal. A helical membrane pass occupies residues 374–394 (ICGIGIILIFFGLTVLLEIVL). Over 395–460 (ELIAKRSTIF…TYYIKIRNLK (66 aa)) the chain is Cytoplasmic. Residues 461–481 (LIMLIFSIVILMQNATMLVVA) traverse the membrane as a helical segment. The Lumenal portion of the chain corresponds to 482-1391 (GENCWTNTEI…EPLNNFFGNY (910 aa)). 2 N-linked (GlcNAc...) asparagine; by host glycosylation sites follow: asparagine 627 and asparagine 1173. Residues 1392 to 1412 (LNMFLYILGGIILLFLALYIL) traverse the membrane as a helical segment. Residues 1413–1437 (MPMCARLRDELKRNERLHQMEMKKR) lie on the Cytoplasmic side of the membrane.

It belongs to the orthobunyavirus envelope glycoprotein family. As to quaternary structure, glycoprotein C and Glycoprotein N interact with each other. In terms of processing, specific enzymatic cleavages in vivo yield mature proteins including nonstructural protein NSm, Glycoprotein C, and Glycoprotein N.

The protein localises to the virion membrane. The protein resides in the host Golgi apparatus membrane. Its subcellular location is the host endoplasmic reticulum membrane. Glycoprotein C and Glycoprotein N interact with each other and are present at the surface of the virion. They are able to attach the virion to a cell receptor and to promote fusion of membranes after endocytosis of the virion. In Culex, this protein is Envelopment polyprotein (GP).